The sequence spans 300 residues: MTDKDFKSGFAVMAGLPNAGKSTLLNAVAGGLLSAVSPKPQMTRQNIIALSEGEKHQIIFVDTPGFLEAKYKLQEIMKGSLSQALEEDADVAVFVFDPLQEYSAHKKLISKLQNIKCPLFVLINKADTQPVEKLRKIEEQLKKDLPDIEKTFFISAKQNKGVAEFKTAVAETLPFNPPYFPQGQWTDRWERFYVAEFIREQIFNLYEKEVPYCTYVEVETFTEDLGPKNYIKAKIYVERESQKPIIIGSKGSSIAKLRVSAQKRIEEFLGRKYRLELEVSVEPQWRSSKKCLQKFGFITE.

In terms of domain architecture, Era-type G spans 7–175 (KSGFAVMAGL…KTAVAETLPF (169 aa)). The segment at 15-22 (GLPNAGKS) is G1. 15–22 (GLPNAGKS) serves as a coordination point for GTP. Residues 41 to 45 (QMTRQ) are G2. A G3 region spans residues 62 to 65 (DTPG). GTP contacts are provided by residues 62 to 66 (DTPGF) and 124 to 127 (NKAD). Residues 124 to 127 (NKAD) are G4. Positions 154–156 (ISA) are G5. A KH type-2 domain is found at 198–283 (IREQIFNLYE…RLELEVSVEP (86 aa)).

This sequence belongs to the TRAFAC class TrmE-Era-EngA-EngB-Septin-like GTPase superfamily. Era GTPase family. Monomer.

The protein resides in the cytoplasm. It is found in the cell inner membrane. An essential GTPase that binds both GDP and GTP, with rapid nucleotide exchange. Plays a role in 16S rRNA processing and 30S ribosomal subunit biogenesis and possibly also in cell cycle regulation and energy metabolism. The protein is GTPase Era of Elusimicrobium minutum (strain Pei191).